We begin with the raw amino-acid sequence, 161 residues long: MIALYPGSFDPLTYGHLDIIERAARLFDRVVVAVLRNPAKVPLFTVEERLSQIQKAVRHLDNVEVEAFHGLTVTVARRLDARVLLRGLRAVSDFEAELQMAQTNRTLATEIETLFLSTSTEHSFLSSSLVKNIAAAGGPVSHMVPEHIEKELRTRFAGAPL.

Ser8 provides a ligand contact to substrate. ATP-binding positions include 8-9 (SF) and His16. Substrate-binding residues include Lys40, Thr72, and Arg86. Residues 87–89 (GLR), Glu97, and 122–128 (HSFLSSS) contribute to the ATP site.

This sequence belongs to the bacterial CoaD family. Homohexamer. Requires Mg(2+) as cofactor.

It is found in the cytoplasm. The enzyme catalyses (R)-4'-phosphopantetheine + ATP + H(+) = 3'-dephospho-CoA + diphosphate. The protein operates within cofactor biosynthesis; coenzyme A biosynthesis; CoA from (R)-pantothenate: step 4/5. Functionally, reversibly transfers an adenylyl group from ATP to 4'-phosphopantetheine, yielding dephospho-CoA (dPCoA) and pyrophosphate. This Gloeobacter violaceus (strain ATCC 29082 / PCC 7421) protein is Phosphopantetheine adenylyltransferase.